The sequence spans 574 residues: MSEGRTFLSQLNVFNKENYQFSSSTTKKEVSNSTVDADNGASDFEAGQQFATELDQGEKQLGILSCIGLICNRMLGTGVFAVSSTIYTLCGSVGLALIMWAVGAIIAISGLYVYMEFGTAIPKNGGEKNYLEAIFRKPKFFITCMYAAYIFFLGWAAGNSINTAIMFLTAADTEVTKWNQRGIGVAVVFFAFLINSLNVKIGLYLQNILGIFKIGIVLFISITGWVALGGGLKDGYQSHNFRNAFEGTETATAYGIVNALYSVIWSFVGYSNVNYALGEVKNPVRTLKIAGPTSMVFLAIIYIFVNIAYFAVVPKDKLISSKLILAADFFDIVFGGQAKRAAAALVGLSALGNVLSVIFSQGRIIQQLGREGVLPFSNFFASSKPFNSPMVGLFQHFIVCTVTILAPPPGDAYLLVQNLISYPMNIINFAISAGLLWIYWQRRQGKIEWNPPIKAGVFVTGFFTLSNLYLIIAPYVPPSNGESVYSSMPYWIHCVIAWGIFFFGGVYYVVWAQLLPRWGHYKLVSKDVLGEDGFWRVKIAKVYDDTIGDVDTQEDGVIETNIIEHYKSEQEKSL.

Over Met-1 to Leu-61 the chain is Cytoplasmic. A Glycyl lysine isopeptide (Lys-Gly) (interchain with G-Cter in ubiquitin) cross-link involves residue Lys-28. The helical transmembrane segment at Gly-62–Val-82 threads the bilayer. Topologically, residues Ser-83–Ser-92 are extracellular. A helical transmembrane segment spans residues Val-93–Val-113. The Cytoplasmic portion of the chain corresponds to Tyr-114 to Phe-140. Residues Phe-141–Ile-161 form a helical membrane-spanning segment. Over Asn-162–Gly-182 the chain is Extracellular. The chain crosses the membrane as a helical span at residues Ile-183–Leu-203. Over Tyr-204–Asn-207 the chain is Cytoplasmic. Residues Ile-208–Leu-228 traverse the membrane as a helical segment. The Extracellular segment spans residues Gly-229–Thr-293. The chain crosses the membrane as a helical span at residues Ser-294–Pro-314. Residues Lys-315–Arg-340 are Cytoplasmic-facing. Residues Ala-341–Gln-361 traverse the membrane as a helical segment. Residues Gly-362–Asn-418 are Extracellular-facing. The chain crosses the membrane as a helical span at residues Leu-419–Tyr-439. Residues Trp-440–Ala-455 are Cytoplasmic-facing. A helical transmembrane segment spans residues Gly-456–Val-476. Residues Pro-477 to Tyr-490 are Extracellular-facing. A helical membrane pass occupies residues Trp-491–Trp-511. Over Ala-512–Leu-574 the chain is Cytoplasmic. Phosphothreonine is present on Thr-552. Ser-573 carries the post-translational modification Phosphoserine.

To yeast low affinity methionine permease (MUP3).

It localises to the membrane. In terms of biological role, high affinity permease for methionine. The chain is High-affinity methionine permease (MUP1) from Saccharomyces cerevisiae (strain ATCC 204508 / S288c) (Baker's yeast).